The sequence spans 200 residues: Max dimerization protein 3 (200 aa).

2 disordered regions span residues S31–R56 and R133–L164. Positions N54–L106 constitute a bHLH domain.

As to quaternary structure, efficient DNA binding requires dimerization with another bHLH protein. Binds DNA as a heterodimer with MAX. As to expression, expressed broadly throughout the CNS and the eye, starting at neurula stages.

It is found in the nucleus. In terms of biological role, transcriptional repressor. Binds with MAX to form a sequence-specific DNA-binding protein complex which recognizes the core sequence 5'-CAC[GA]TG-3'. In Xenopus laevis (African clawed frog), this protein is Max dimerization protein 3 (mxd3).